Consider the following 242-residue polypeptide: Biosynthetic peptidoglycan transglycosylase (242 aa).

A helical transmembrane segment spans residues 19 to 39 (ILAALAVFWGGGIALFSVVPV).

It belongs to the glycosyltransferase 51 family.

The protein localises to the cell inner membrane. It catalyses the reaction [GlcNAc-(1-&gt;4)-Mur2Ac(oyl-L-Ala-gamma-D-Glu-L-Lys-D-Ala-D-Ala)](n)-di-trans,octa-cis-undecaprenyl diphosphate + beta-D-GlcNAc-(1-&gt;4)-Mur2Ac(oyl-L-Ala-gamma-D-Glu-L-Lys-D-Ala-D-Ala)-di-trans,octa-cis-undecaprenyl diphosphate = [GlcNAc-(1-&gt;4)-Mur2Ac(oyl-L-Ala-gamma-D-Glu-L-Lys-D-Ala-D-Ala)](n+1)-di-trans,octa-cis-undecaprenyl diphosphate + di-trans,octa-cis-undecaprenyl diphosphate + H(+). It functions in the pathway cell wall biogenesis; peptidoglycan biosynthesis. Functionally, peptidoglycan polymerase that catalyzes glycan chain elongation from lipid-linked precursors. The polypeptide is Biosynthetic peptidoglycan transglycosylase (Salmonella paratyphi B (strain ATCC BAA-1250 / SPB7)).